Reading from the N-terminus, the 547-residue chain is G protein-coupled receptor associated sorting protein 3 (547 aa).

Basic residues-rich tracts occupy residues 1–10 (MTGTKNKTRA) and 38–48 (AKTRAKAKAKT). The interval 1–53 (MTGTKNKTRAQAKTEKKPVTQAKAGAEREATGVVRPVAKTRAKAKAKTGSKTD) is disordered.

The protein belongs to the GPRASP family. In terms of assembly, homodimer.

The protein resides in the cytoplasm. The protein localises to the nucleus. In terms of biological role, survival and differentiation promoting protein that plays a role in the regulation of neurosynaptogenesis. Induces phosphatase PP2A activity which results in APP dephosphorylation and inhibits BACE1-mediated processing of APP. The polypeptide is G protein-coupled receptor associated sorting protein 3 (GPRASP3) (Macaca fascicularis (Crab-eating macaque)).